Here is a 108-residue protein sequence, read N- to C-terminus: UPF0060 membrane protein Spro_2289 (108 aa).

A run of 4 helical transmembrane segments spans residues 6 to 26, 31 to 51, 61 to 81, and 85 to 105; these read LLFF…YLWL, SAWL…LLTL, AAYG…VDGV, and ALDW…VSGW.

This sequence belongs to the UPF0060 family.

It localises to the cell inner membrane. This is UPF0060 membrane protein Spro_2289 from Serratia proteamaculans (strain 568).